We begin with the raw amino-acid sequence, 642 residues long: Core protein VP4 (642 aa).

This sequence belongs to the orbivirus VP4 family.

It is found in the virion. The VP4 protein is one of the five proteins (with VP1, VP3, VP6 and VP7) which form the inner capsid of the virus. This is Core protein VP4 (Segment-4) from African horse sickness virus (AHSV).